The sequence spans 215 residues: Pyrrolidone-carboxylate peptidase (215 aa).

Active-site residues include glutamate 81, cysteine 144, and histidine 168.

The protein belongs to the peptidase C15 family. As to quaternary structure, homotetramer.

The protein localises to the cytoplasm. The catalysed reaction is Release of an N-terminal pyroglutamyl group from a polypeptide, the second amino acid generally not being Pro.. Its function is as follows. Removes 5-oxoproline from various penultimate amino acid residues except L-proline. In Bacillus licheniformis (strain ATCC 14580 / DSM 13 / JCM 2505 / CCUG 7422 / NBRC 12200 / NCIMB 9375 / NCTC 10341 / NRRL NRS-1264 / Gibson 46), this protein is Pyrrolidone-carboxylate peptidase.